Consider the following 272-residue polypeptide: Undecaprenyl-diphosphatase (272 aa).

Helical transmembrane passes span 1 to 21 (MSYLEAIILGLVQGLTEFLPI), 38 to 58 (PGATFTAITQLGTELAVVVFF), 84 to 104 (VRMGWLVIIGTIPIGIAGYLF), 112 to 132 (FRSLWIVAIVLIVFGILLGLA), 145 to 165 (MTYGHGVSIGIAQALALVPGV), 183 to 203 (PVAAEYSFLLAVPAVFGSGLY), 219 to 239 (QTAVATLIAFIVGLAVIAGLM), and 250 to 270 (FVVYRVALGVVLLVLLGTGAI).

It belongs to the UppP family.

It is found in the cell membrane. The enzyme catalyses di-trans,octa-cis-undecaprenyl diphosphate + H2O = di-trans,octa-cis-undecaprenyl phosphate + phosphate + H(+). In terms of biological role, catalyzes the dephosphorylation of undecaprenyl diphosphate (UPP). Confers resistance to bacitracin. This Clavibacter michiganensis subsp. michiganensis (strain NCPPB 382) protein is Undecaprenyl-diphosphatase.